Reading from the N-terminus, the 423-residue chain is Glutamate--cysteine ligase EgtA (423 aa).

It belongs to the glutamate--cysteine ligase type 2 family. EgtA subfamily.

The enzyme catalyses L-cysteine + L-glutamate + ATP = gamma-L-glutamyl-L-cysteine + ADP + phosphate + H(+). It functions in the pathway amino-acid biosynthesis; ergothioneine biosynthesis. Functionally, catalyzes the synthesis of gamma-glutamylcysteine (gamma-GC). This compound is used as substrate for the biosynthesis of the low-molecular thiol compound ergothioneine. The protein is Glutamate--cysteine ligase EgtA of Mycolicibacterium smegmatis (strain ATCC 700084 / mc(2)155) (Mycobacterium smegmatis).